We begin with the raw amino-acid sequence, 245 residues long: Type II restriction enzyme MjaIV (245 aa).

It catalyses the reaction Endonucleolytic cleavage of DNA to give specific double-stranded fragments with terminal 5'-phosphates.. In terms of biological role, a P subtype restriction enzyme that recognizes the double-stranded sequence 5'-GTNNAC-3'; the cleavage site is unknown. The protein is Type II restriction enzyme MjaIV (mjaIVR) of Methanocaldococcus jannaschii (strain ATCC 43067 / DSM 2661 / JAL-1 / JCM 10045 / NBRC 100440) (Methanococcus jannaschii).